A 327-amino-acid polypeptide reads, in one-letter code: Flap endonuclease 1 (327 aa).

An N-domain region spans residues 1–100; that stretch reads MGNADLRQLA…DEIADRREQR (100 aa). Mg(2+) contacts are provided by D28, D82, E154, E156, D176, D178, and D226. The tract at residues 118–247 is I-domain; that stretch reads EAARLDARTQ…TALDAIGEHG (130 aa). The interaction with PCNA stretch occupies residues 319 to 327; it reads AQTGLDRWT.

Belongs to the XPG/RAD2 endonuclease family. FEN1 subfamily. As to quaternary structure, interacts with PCNA. PCNA stimulates the nuclease activity without altering cleavage specificity. The cofactor is Mg(2+).

Functionally, structure-specific nuclease with 5'-flap endonuclease and 5'-3' exonuclease activities involved in DNA replication and repair. During DNA replication, cleaves the 5'-overhanging flap structure that is generated by displacement synthesis when DNA polymerase encounters the 5'-end of a downstream Okazaki fragment. Binds the unpaired 3'-DNA end and kinks the DNA to facilitate 5' cleavage specificity. Cleaves one nucleotide into the double-stranded DNA from the junction in flap DNA, leaving a nick for ligation. Also involved in the base excision repair (BER) pathway. Acts as a genome stabilization factor that prevents flaps from equilibrating into structures that lead to duplications and deletions. Also possesses 5'-3' exonuclease activity on nicked or gapped double-stranded DNA. In Halobacterium salinarum (strain ATCC 29341 / DSM 671 / R1), this protein is Flap endonuclease 1.